The following is a 62-amino-acid chain: Endoregulin (62 aa).

The chain crosses the membrane as a helical span at residues 25–45; that stretch reads LAVIILFITAVLLLILFAIVF.

In terms of assembly, homooligomer. Can also form heterooligomers with other sarcoplasmic/endoplasmic reticulum calcium ATPase (SERCA) regulators ARLN, PLN, SLN and STRIT1/DWORF. Monomer. Interacts as a monomer with ATP2A2/SERCA2; the interaction results in inhibition of ATP2A2 Ca(2+) affinity.

The protein localises to the endoplasmic reticulum membrane. Inhibits the activity of the calcium ATPases ATP2A2/SERCA2 and ATP2A3/SERCA3 by decreasing their apparent affinity for Ca(2+). The protein is Endoregulin of Homo sapiens (Human).